The following is a 202-amino-acid chain: FMN-dependent NADH:quinone oxidoreductase 2 (202 aa).

FMN contacts are provided by residues S9, 15–17 (SAS), and 95–98 (MWNL).

Belongs to the azoreductase type 1 family. In terms of assembly, homodimer. FMN is required as a cofactor.

The enzyme catalyses 2 a quinone + NADH + H(+) = 2 a 1,4-benzosemiquinone + NAD(+). It carries out the reaction N,N-dimethyl-1,4-phenylenediamine + anthranilate + 2 NAD(+) = 2-(4-dimethylaminophenyl)diazenylbenzoate + 2 NADH + 2 H(+). Its function is as follows. Quinone reductase that provides resistance to thiol-specific stress caused by electrophilic quinones. In terms of biological role, also exhibits azoreductase activity. Catalyzes the reductive cleavage of the azo bond in aromatic azo compounds to the corresponding amines. The sequence is that of FMN-dependent NADH:quinone oxidoreductase 2 from Hahella chejuensis (strain KCTC 2396).